The primary structure comprises 157 residues: MFDVLMYLFETYIHNEAELRVDQDRLERDLTDAGFDREDIYNALLWLEKLADYQDGLAEPMQLASDPLSMRIYTVEECERLDASCRGFLLFLEQIQVLNLETREMVIERVLALDTAEFDLEDLKWVILMVLFNIPGCENAYQQMEELLFEVNEGMLH.

The protein belongs to the Smg family.

This chain is Protein Smg, found in Salmonella agona (strain SL483).